We begin with the raw amino-acid sequence, 347 residues long: N-acetyl-gamma-glutamyl-phosphate reductase (347 aa).

Cysteine 152 is a catalytic residue.

This sequence belongs to the NAGSA dehydrogenase family. Type 1 subfamily.

It is found in the cytoplasm. The catalysed reaction is N-acetyl-L-glutamate 5-semialdehyde + phosphate + NADP(+) = N-acetyl-L-glutamyl 5-phosphate + NADPH + H(+). Its pathway is amino-acid biosynthesis; L-arginine biosynthesis; N(2)-acetyl-L-ornithine from L-glutamate: step 3/4. Its function is as follows. Catalyzes the NADPH-dependent reduction of N-acetyl-5-glutamyl phosphate to yield N-acetyl-L-glutamate 5-semialdehyde. This chain is N-acetyl-gamma-glutamyl-phosphate reductase, found in Neisseria meningitidis serogroup C (strain 053442).